We begin with the raw amino-acid sequence, 412 residues long: Protein trichome birefringence-like 13 (412 aa).

The chain crosses the membrane as a helical; Signal-anchor for type II membrane protein span at residues 9-29 (PSLFPLLSLLCFISIFLLLSL). Positions 137 to 139 (GDS) match the GDS motif motif. A DCXHWCLPGXXDXWN motif motif is present at residues 385–399 (DCMHWCLPGLTDTWN).

The protein belongs to the PC-esterase family. TBL subfamily.

It localises to the membrane. In terms of biological role, may act as a bridging protein that binds pectin and other cell wall polysaccharides. Probably involved in maintaining esterification of pectins. May be involved in the specific O-acetylation of cell wall polymers. The polypeptide is Protein trichome birefringence-like 13 (TBL13) (Arabidopsis thaliana (Mouse-ear cress)).